The chain runs to 379 residues: Glutamate 5-kinase (379 aa).

ATP is bound at residue lysine 20. Serine 59, aspartate 146, and asparagine 158 together coordinate substrate. 220–226 (SGGMYSK) provides a ligand contact to ATP. The region spanning 285-362 (TGSVVVDDGA…AELTAILGDN (78 aa)) is the PUA domain.

It belongs to the glutamate 5-kinase family.

The protein localises to the cytoplasm. It carries out the reaction L-glutamate + ATP = L-glutamyl 5-phosphate + ADP. The protein operates within amino-acid biosynthesis; L-proline biosynthesis; L-glutamate 5-semialdehyde from L-glutamate: step 1/2. Catalyzes the transfer of a phosphate group to glutamate to form L-glutamate 5-phosphate. The sequence is that of Glutamate 5-kinase from Oleidesulfovibrio alaskensis (strain ATCC BAA-1058 / DSM 17464 / G20) (Desulfovibrio alaskensis).